The sequence spans 686 residues: Glycogenin (686 aa).

4 residues coordinate UDP: L13, N16, Y19, and R82. UDP-alpha-D-glucose is bound by residues L13, N16, Y19, R82, K91, D107, A108, D109, N139, T140, D166, D169, and Q170. D107, A108, and D109 together coordinate UDP. Mn(2+) is bound at residue D107. Residue D109 participates in Mn(2+) binding. O-linked (Glc...) tyrosine glycosylation is found at Y196 and Y198. Residues H213, G216, and K219 each contribute to the UDP site. H213 lines the Mn(2+) pocket. UDP-alpha-D-glucose contacts are provided by G216 and K219. 4 disordered regions span residues V264 to P331, P381 to A444, K460 to A533, and K603 to T686. 2 stretches are compositionally biased toward low complexity: residues S285–H308 and S398–T416. Positions S307–T686 are not required for catalytic activity. 2 stretches are compositionally biased toward polar residues: residues V424 to G442 and A471 to Q483. Residues T677–T686 show a composition bias toward acidic residues.

The protein belongs to the glycosyltransferase 8 family. Glycogenin subfamily. In terms of assembly, interacts with glycogen synthase gsy-1; the interaction is direct. Mn(2+) serves as cofactor.

The protein resides in the cytoplasm. Its subcellular location is the vacuole. It catalyses the reaction L-tyrosyl-[glycogenin] + UDP-alpha-D-glucose = alpha-D-glucosyl-L-tyrosyl-[glycogenin] + UDP + H(+). The enzyme catalyses [1,4-alpha-D-glucosyl](n)-L-tyrosyl-[glycogenin] + UDP-alpha-D-glucose = [1,4-alpha-D-glucosyl](n+1)-L-tyrosyl-[glycogenin] + UDP + H(+). Functionally, self-glucosylating initiator of glycogen synthesis. It catalyzes the formation of a short alpha (1,4)-glucosyl chain covalently attached via a glucose 1-O-tyrosyl linkage to internal tyrosine residues and these chains act as primers for the elongation reaction catalyzed by glycogen synthase. The polypeptide is Glycogenin (Neurospora crassa (strain ATCC 24698 / 74-OR23-1A / CBS 708.71 / DSM 1257 / FGSC 987)).